Reading from the N-terminus, the 148-residue chain is Large ribosomal subunit protein bL9 (148 aa).

The protein belongs to the bacterial ribosomal protein bL9 family.

Its function is as follows. Binds to the 23S rRNA. The protein is Large ribosomal subunit protein bL9 of Hydrogenobaculum sp. (strain Y04AAS1).